The primary structure comprises 1091 residues: ATPase family AAA domain-containing protein 2 (1091 aa).

The interval 32–211 is disordered; it reads LEDLGVFNET…HFERRRKRSR (180 aa). Basic and acidic residues predominate over residues 53–62; sequence KQKDIQRTDE. The segment covering 74–119 has biased composition (acidic residues); it reads SSEEGEDQEHEDDGEDEDDEDEDDDDDDDDDDDDDEDDEDEEDGEE. Lysine 148 participates in a covalent cross-link: Glycyl lysine isopeptide (Lys-Gly) (interchain with G-Cter in SUMO2). A phosphoserine mark is found at serine 158, serine 168, serine 173, and serine 241. 298 to 305 provides a ligand contact to ATP; it reads GPPGTGKT. 2 positions are modified to phosphoserine: serine 577 and serine 582. 2 coiled-coil regions span residues 801–825 and 917–943; these read LTAEEVKRLEEQEEDTFRELRIFLR and YAIIKEELDEDFEQLCEEIQESRKKRG. Residues 811-923 form the Bromo domain; sequence EQEEDTFREL…DTAYAIIKEE (113 aa). Lysine 959 participates in a covalent cross-link: Glycyl lysine isopeptide (Lys-Gly) (interchain with G-Cter in SUMO2). The segment at 961 to 985 is disordered; it reads NSTLVGDKRSDPEQNEKLKTPSTPV. Basic and acidic residues predominate over residues 966 to 979; that stretch reads GDKRSDPEQNEKLK. Position 970 is a phosphoserine (serine 970). Lysine 979 participates in a covalent cross-link: Glycyl lysine isopeptide (Lys-Gly) (interchain with G-Cter in SUMO2). Threonine 980 and threonine 983 each carry phosphothreonine. Serine 1003 is subject to Phosphoserine. Threonine 1024 is modified (phosphothreonine).

The protein belongs to the AAA ATPase family. Interaction with ESR1 and NCOA3 is enhanced by estradiol. Interacts with acetylated lysine residues on histone H1.4, H2A, H2B and H3 (in vitro).

Its subcellular location is the nucleus. It catalyses the reaction ATP + H2O = ADP + phosphate + H(+). In terms of biological role, may be a transcriptional coactivator of the nuclear receptor ESR1 required to induce the expression of a subset of estradiol target genes, such as CCND1, MYC and E2F1. May play a role in the recruitment or occupancy of CREBBP at some ESR1 target gene promoters. May be required for histone hyperacetylation. The sequence is that of ATPase family AAA domain-containing protein 2 (ATAD2) from Pongo abelii (Sumatran orangutan).